Here is a 171-residue protein sequence, read N- to C-terminus: Crossover junction endodeoxyribonuclease RuvC (171 aa).

Catalysis depends on residues Asp-7, Glu-66, and Asp-138. Residues Asp-7, Glu-66, and Asp-138 each contribute to the Mg(2+) site.

Belongs to the RuvC family. As to quaternary structure, homodimer which binds Holliday junction (HJ) DNA. The HJ becomes 2-fold symmetrical on binding to RuvC with unstacked arms; it has a different conformation from HJ DNA in complex with RuvA. In the full resolvosome a probable DNA-RuvA(4)-RuvB(12)-RuvC(2) complex forms which resolves the HJ. The cofactor is Mg(2+).

It is found in the cytoplasm. The enzyme catalyses Endonucleolytic cleavage at a junction such as a reciprocal single-stranded crossover between two homologous DNA duplexes (Holliday junction).. Functionally, the RuvA-RuvB-RuvC complex processes Holliday junction (HJ) DNA during genetic recombination and DNA repair. Endonuclease that resolves HJ intermediates. Cleaves cruciform DNA by making single-stranded nicks across the HJ at symmetrical positions within the homologous arms, yielding a 5'-phosphate and a 3'-hydroxyl group; requires a central core of homology in the junction. The consensus cleavage sequence is 5'-(A/T)TT(C/G)-3'. Cleavage occurs on the 3'-side of the TT dinucleotide at the point of strand exchange. HJ branch migration catalyzed by RuvA-RuvB allows RuvC to scan DNA until it finds its consensus sequence, where it cleaves and resolves the cruciform DNA. In Francisella tularensis subsp. holarctica (strain FTNF002-00 / FTA), this protein is Crossover junction endodeoxyribonuclease RuvC.